Reading from the N-terminus, the 303-residue chain is Target of rapamycin complex subunit LST8 (303 aa).

WD repeat units lie at residues 1-27, 30-68, 73-112, 114-153, 157-196, 205-244, and 248-287; these read MSVILVSAGYDHTIRFWEALTGVCSRT, HSDSQVNRLEITNDKKLLATAGHQNVRLYDIRTTNPNPV, GHRGNVTSVSFQQDNRWMVTSSEDGTIKVWDVRSPSIPRN, KHNAPVNEVVIHPNQGELISCDRDGNIRIWDLGENQCTHQ, EDDTSLQSLSMASDGSMLAAANTKGNCYVWEMPNHTDASH, AHSTYITRILLSSDVKHLATCSADHTARVWSIDDDFKLET, and GHQRWVWDCAFSADSAYLVTASSDHYVRLWDLSTREIVRQ.

Belongs to the WD repeat LST8 family. As to quaternary structure, the target of rapamycin complex 1 (TORC1) is composed of at least KOG1, LST8, TCO89 and either TOR1 (TORC1-A) or TOR2 (TORC1-B). TORC1 binds to and is inhibited by FKBP-rapamycin. Interacts with PIB2; following activation of PIB2 by glutamine or cysteine and as part of the TORC1 complex. The target of rapamycin complex 2 (TORC2) is composed of at least AVO1, AVO2, BIT61, LST8, TOR2 and TSC11. TORC2 forms a homodimer. Contrary to TORC1, TORC2 does not bind to and is not sensitive to FKBP-rapamycin. LST8 binds to the C-terminal kinase domain in TOR2.

It localises to the cell membrane. The protein resides in the vacuole membrane. In terms of biological role, essential component of both TORC1 and TORC2. TORC1 regulates multiple cellular processes to control cell growth in response to environmental signals. Nutrient limitation and environmental stress signals cause inactivation of TORC1. Active TORC1 positively controls ribosome biogenesis via control of rRNA, ribosomal protein and tRNA gene expression, and rRNA processing. TORC1 positively controls protein biosynthesis by regulation of mRNA stability, translation initiation factor activity, and high-affinity amino acid permeases that serve to provide amino acids for use by the translation machinery. TORC1 also promotes growth by sequestering a number of nutrient and general stress-responsive transcription factors in the cytoplasm. TORC1 negatively controls macroautophagy, a process to recycle surplus cytoplasmic mass under nutrient starvation conditions. LST8 is involved in the negative regulation of transcription factors GLN3 and RTG1-RTG3, limiting the synthesis of alpha-ketoglutarate, glutamate and glutamine. LST8 is required for targeting of amino acid permeases (AAPs) to the plasma membrane. TORC2 regulates cell cycle-dependent polarization of the actin-cytoskeleton, cell wall integrity, and receptor endocytosis. TORC2 controls polarity of the actin cytoskeleton, which is required for orienting the secretory pathway toward discrete growth sites, via the RHO1/PKC1/MAPK cell integrity pathway. LST8 is involved in maintenance of cell wall integrity. LST8 modulates TOR2 kinase activity. The chain is Target of rapamycin complex subunit LST8 from Saccharomyces cerevisiae (strain ATCC 204508 / S288c) (Baker's yeast).